Here is a 470-residue protein sequence, read N- to C-terminus: Uronate isomerase (470 aa).

The protein belongs to the metallo-dependent hydrolases superfamily. Uronate isomerase family.

The enzyme catalyses D-glucuronate = D-fructuronate. The catalysed reaction is aldehydo-D-galacturonate = keto-D-tagaturonate. It functions in the pathway carbohydrate metabolism; pentose and glucuronate interconversion. The chain is Uronate isomerase from Escherichia coli O8 (strain IAI1).